We begin with the raw amino-acid sequence, 346 residues long: Methylthioribose-1-phosphate isomerase (346 aa).

Substrate is bound by residues 46–48 (RGA), Arg89, and Gln196. The active-site Proton donor is the Asp237. 247–248 (NK) lines the substrate pocket.

It belongs to the eIF-2B alpha/beta/delta subunits family. MtnA subfamily.

It catalyses the reaction 5-(methylsulfanyl)-alpha-D-ribose 1-phosphate = 5-(methylsulfanyl)-D-ribulose 1-phosphate. It functions in the pathway amino-acid biosynthesis; L-methionine biosynthesis via salvage pathway; L-methionine from S-methyl-5-thio-alpha-D-ribose 1-phosphate: step 1/6. Functionally, catalyzes the interconversion of methylthioribose-1-phosphate (MTR-1-P) into methylthioribulose-1-phosphate (MTRu-1-P). In Geotalea uraniireducens (strain Rf4) (Geobacter uraniireducens), this protein is Methylthioribose-1-phosphate isomerase.